A 194-amino-acid chain; its full sequence is Lysozyme g-like protein 1 (194 aa).

Residues 1–19 (MSALWLLLGLLALMDLSES) form the signal peptide. 2 cysteine pairs are disulfide-bonded: C24–C80 and C38–C49.

It belongs to the glycosyl hydrolase 23 family.

It localises to the secreted. The chain is Lysozyme g-like protein 1 (LYG1) from Homo sapiens (Human).